The chain runs to 259 residues: DNA-directed RNA polymerase subunit Rpo3 (259 aa).

The protein belongs to the archaeal Rpo3/eukaryotic RPB3 RNA polymerase subunit family. As to quaternary structure, part of the RNA polymerase complex.

The protein resides in the cytoplasm. It catalyses the reaction RNA(n) + a ribonucleoside 5'-triphosphate = RNA(n+1) + diphosphate. DNA-dependent RNA polymerase (RNAP) catalyzes the transcription of DNA into RNA using the four ribonucleoside triphosphates as substrates. The sequence is that of DNA-directed RNA polymerase subunit Rpo3 from Pyrococcus horikoshii (strain ATCC 700860 / DSM 12428 / JCM 9974 / NBRC 100139 / OT-3).